The following is a 961-amino-acid chain: Copper-exporting P-type ATPase (961 aa).

2 HMA domains span residues 3–64 and 69–130; these read QTTL…YQAT and PDVE…YHAT. Residues cysteine 14, cysteine 17, cysteine 80, and cysteine 83 each coordinate Cu(+). Disordered regions lie at residues 131 to 153 and 178 to 201; these read QQGI…PESL and VLPT…TASA. Positions 142–151 are enriched in polar residues; that stretch reads LTHSAQSQPE. The HMA 3 domain maps to 226 to 289; that stretch reads ESVQLLLTGM…AVKNAGYGAE (64 aa). Cysteine 237 and cysteine 240 together coordinate Cu(+). 5 consecutive transmembrane segments (helical) span residues 316-336, 345-365, 381-401, 565-585, and 592-612; these read AALG…GGSM, PWLI…GHFY, TLVA…NIWP, AVFV…WYFF, and VYTL…ALGL. Catalysis depends on aspartate 650, which acts as the 4-aspartylphosphate intermediate. Mg(2+) is bound by residues aspartate 847 and aspartate 851. Transmembrane regions (helical) follow at residues 860–880, 906–926, and 928–948; these read VGIA…ITLM, LGAF…LYPF, and GTLL…ITVV.

This sequence belongs to the cation transport ATPase (P-type) (TC 3.A.3) family. Type IB subfamily.

It is found in the cell membrane. It carries out the reaction Cu(+)(in) + ATP + H2O = Cu(+)(out) + ADP + phosphate + H(+). Its function is as follows. Involved in copper export. This Yersinia pestis protein is Copper-exporting P-type ATPase (copA).